A 199-amino-acid chain; its full sequence is MFRLLKRACSFLLLFVIYQSFVIHHNVQRVLAYKPMVEKTLAENDTKANVDLVLAMIYTETKGGEADVMQSSESSSGQKNSITDSQASIEHGVNLLSHNLALAEEAGVDSWTAVQAYNFGTAYIDYIAKHGSQNTVDLATTYSKTVVAPSLGNTSGQTYFYYHPLALISGGKLYKNGGNIYYSREVHFNLYLIELMSLF.

The protein resides in the cell surface. In Streptococcus pyogenes serotype M3 (strain ATCC BAA-595 / MGAS315), this protein is Pneumococcal vaccine antigen A homolog (pvaA).